The primary structure comprises 996 residues: UPF0182 protein CE0802 (996 aa).

Transmembrane regions (helical) follow at residues 19 to 39 (VTWI…TVGF), 63 to 83 (IILF…AGYF), 115 to 135 (ILII…QRSW), 176 to 196 (STLL…LGGI), 212 to 234 (GARA…TYWL), 262 to 282 (KIIL…AIFL), and 290 to 310 (LAVV…PLML). Positions 920 to 950 (VPDVNATEDADATTDGEDETPAAPAAPAGSE) are disordered. Acidic residues predominate over residues 925-939 (ATEDADATTDGEDET). Over residues 940–950 (PAAPAAPAGSE) the composition is skewed to low complexity.

The protein belongs to the UPF0182 family.

It is found in the cell membrane. The protein is UPF0182 protein CE0802 of Corynebacterium efficiens (strain DSM 44549 / YS-314 / AJ 12310 / JCM 11189 / NBRC 100395).